Reading from the N-terminus, the 302-residue chain is Homoserine O-acetyltransferase (302 aa).

Catalysis depends on Cys-142, which acts as the Acyl-thioester intermediate. Substrate is bound by residues Lys-163 and Ser-192. His-235 acts as the Proton acceptor in catalysis. The active site involves Glu-237. A substrate-binding site is contributed by Arg-249.

Belongs to the MetA family.

The protein resides in the cytoplasm. It catalyses the reaction L-homoserine + acetyl-CoA = O-acetyl-L-homoserine + CoA. It functions in the pathway amino-acid biosynthesis; L-methionine biosynthesis via de novo pathway; O-acetyl-L-homoserine from L-homoserine: step 1/1. In terms of biological role, transfers an acetyl group from acetyl-CoA to L-homoserine, forming acetyl-L-homoserine. The sequence is that of Homoserine O-acetyltransferase from Clostridium novyi (strain NT).